A 149-amino-acid chain; its full sequence is Transcriptional regulator MraZ (149 aa).

SpoVT-AbrB domains follow at residues 6–52 and 81–124; these read RSYR…TPED and VEEL…SEEE.

Belongs to the MraZ family. As to quaternary structure, forms oligomers.

The protein resides in the cytoplasm. The protein localises to the nucleoid. The protein is Transcriptional regulator MraZ of Oleidesulfovibrio alaskensis (strain ATCC BAA-1058 / DSM 17464 / G20) (Desulfovibrio alaskensis).